Reading from the N-terminus, the 341-residue chain is Elongation factor Ts (341 aa).

Positions 80-83 (TDFV) are involved in Mg(2+) ion dislocation from EF-Tu.

Belongs to the EF-Ts family.

The protein localises to the cytoplasm. Associates with the EF-Tu.GDP complex and induces the exchange of GDP to GTP. It remains bound to the aminoacyl-tRNA.EF-Tu.GTP complex up to the GTP hydrolysis stage on the ribosome. The polypeptide is Elongation factor Ts (Lactobacillus gasseri (strain ATCC 33323 / DSM 20243 / BCRC 14619 / CIP 102991 / JCM 1131 / KCTC 3163 / NCIMB 11718 / NCTC 13722 / AM63)).